A 1545-amino-acid chain; its full sequence is Pentafunctional AROM polypeptide (1545 aa).

The segment at 1-383 (MSGLIEKVSI…YEPKASYVND (383 aa)) is 3-dehydroquinate synthase. NAD(+)-binding positions include 44-46 (DSN), 82-85 (EANK), 113-115 (GGV), and D118. Residue R129 participates in 7-phospho-2-dehydro-3-deoxy-D-arabino-heptonate binding. Position 138–139 (138–139 (TS)) interacts with NAD(+). Residues D145 and K151 each contribute to the 7-phospho-2-dehydro-3-deoxy-D-arabino-heptonate site. K160 is a binding site for NAD(+). 7-phospho-2-dehydro-3-deoxy-D-arabino-heptonate is bound at residue N161. NAD(+)-binding positions include 178–181 (FLET) and N189. E193 is a binding site for Zn(2+). 7-phospho-2-dehydro-3-deoxy-D-arabino-heptonate contacts are provided by residues 193 to 196 (EVVK) and K249. The active-site Proton acceptor; for 3-dehydroquinate synthase activity is the E259. 7-phospho-2-dehydro-3-deoxy-D-arabino-heptonate-binding positions include 263–267 (RNLLN) and H270. H270 contacts Zn(2+). H274 serves as the catalytic Proton acceptor; for 3-dehydroquinate synthase activity. Residues H286 and K355 each contribute to the 7-phospho-2-dehydro-3-deoxy-D-arabino-heptonate site. Zn(2+) is bound at residue H286. The interval 396–840 (VKDFNSAPST…WDILHTTFNV (445 aa)) is EPSP synthase. The active-site For EPSP synthase activity is C822. Positions 859-1049 (DKSIIVIGMR…IPNGRSAFVC (191 aa)) are shikimate kinase. 866–873 (GMRAAGKS) provides a ligand contact to ATP. Positions 1050–1261 (LTYEDLAPVS…AAPGQLTLKE (212 aa)) are 3-dehydroquinase. Residue H1166 is the Proton acceptor; for 3-dehydroquinate dehydratase activity of the active site. Catalysis depends on K1195, which acts as the Schiff-base intermediate with substrate; for 3-dehydroquinate dehydratase activity. The tract at residues 1274–1545 (RKKFYIVGKP…GYQFSSHIDL (272 aa)) is shikimate dehydrogenase.

It in the N-terminal section; belongs to the sugar phosphate cyclases superfamily. Dehydroquinate synthase family. This sequence in the 2nd section; belongs to the EPSP synthase family. In the 3rd section; belongs to the shikimate kinase family. The protein in the 4th section; belongs to the type-I 3-dehydroquinase family. It in the C-terminal section; belongs to the shikimate dehydrogenase family. Homodimer. Requires Zn(2+) as cofactor.

The protein localises to the cytoplasm. The catalysed reaction is 7-phospho-2-dehydro-3-deoxy-D-arabino-heptonate = 3-dehydroquinate + phosphate. The enzyme catalyses 3-dehydroquinate = 3-dehydroshikimate + H2O. It carries out the reaction shikimate + NADP(+) = 3-dehydroshikimate + NADPH + H(+). It catalyses the reaction shikimate + ATP = 3-phosphoshikimate + ADP + H(+). The catalysed reaction is 3-phosphoshikimate + phosphoenolpyruvate = 5-O-(1-carboxyvinyl)-3-phosphoshikimate + phosphate. Its pathway is metabolic intermediate biosynthesis; chorismate biosynthesis; chorismate from D-erythrose 4-phosphate and phosphoenolpyruvate: step 2/7. It functions in the pathway metabolic intermediate biosynthesis; chorismate biosynthesis; chorismate from D-erythrose 4-phosphate and phosphoenolpyruvate: step 3/7. It participates in metabolic intermediate biosynthesis; chorismate biosynthesis; chorismate from D-erythrose 4-phosphate and phosphoenolpyruvate: step 4/7. The protein operates within metabolic intermediate biosynthesis; chorismate biosynthesis; chorismate from D-erythrose 4-phosphate and phosphoenolpyruvate: step 5/7. Its pathway is metabolic intermediate biosynthesis; chorismate biosynthesis; chorismate from D-erythrose 4-phosphate and phosphoenolpyruvate: step 6/7. Its function is as follows. The AROM polypeptide catalyzes 5 consecutive enzymatic reactions in prechorismate polyaromatic amino acid biosynthesis. This is Pentafunctional AROM polypeptide from Komagataella phaffii (strain GS115 / ATCC 20864) (Yeast).